A 143-amino-acid polypeptide reads, in one-letter code: Nucleoside diphosphate kinase (143 aa).

Residues Lys11, Phe59, Arg87, Thr93, Arg104, and Asn114 each contribute to the ATP site. The Pros-phosphohistidine intermediate role is filled by His117.

Belongs to the NDK family. In terms of assembly, homotetramer. Mg(2+) is required as a cofactor.

The protein localises to the cytoplasm. It catalyses the reaction a 2'-deoxyribonucleoside 5'-diphosphate + ATP = a 2'-deoxyribonucleoside 5'-triphosphate + ADP. The enzyme catalyses a ribonucleoside 5'-diphosphate + ATP = a ribonucleoside 5'-triphosphate + ADP. In terms of biological role, major role in the synthesis of nucleoside triphosphates other than ATP. The ATP gamma phosphate is transferred to the NDP beta phosphate via a ping-pong mechanism, using a phosphorylated active-site intermediate. This Shewanella denitrificans (strain OS217 / ATCC BAA-1090 / DSM 15013) protein is Nucleoside diphosphate kinase.